Reading from the N-terminus, the 1022-residue chain is ATPase MORC2B (1022 aa).

Residue Ala2 is modified to N-acetylalanine. Residues Asn39, 87 to 89 (SAK), and 99 to 105 (RYGNGLK) each bind ATP. Asn39 lines the Mg(2+) pocket. Residues 285 to 362 (KTRAEQEVKK…RDAKQQALKE (78 aa)) adopt a coiled-coil conformation. Lys427 contributes to the ATP binding site. A CW-type zinc finger spans residues 490-544 (AMQVPTTIQCDLCLKWRTLPFQLSAVEEGYPINWVCSMNPDPEQDQCEAFELKQK). The Zn(2+) site is built by Cys499, Cys502, Cys525, and Cys536. Positions 555–583 (KTQEERQKQLTEKIQQEQRKLKALKKIKP) form a coiled coil. Ser615 is modified (phosphoserine). A Glycyl lysine isopeptide (Lys-Gly) (interchain with G-Cter in SUMO2) cross-link involves residue Lys649. A phosphoserine mark is found at Ser690, Ser724, Ser733, and Ser737. A Glycyl lysine isopeptide (Lys-Gly) (interchain with G-Cter in SUMO2) cross-link involves residue Lys758. Phosphoserine is present on residues Ser768 and Ser770. Thr827 is modified (phosphothreonine). Ser846 and Ser851 each carry phosphoserine. Lys922 is covalently cross-linked (Glycyl lysine isopeptide (Lys-Gly) (interchain with G-Cter in SUMO2)). The stretch at 962–1001 (QAKVSEESLRISQKKLQETEEKLQKLRTNIQTLLQMAQQG) forms a coiled coil.

In terms of assembly, interacts with Morc2a. As to expression, protein is abundant in testes but not detected in other adult tissues examined (at protein level). Detected in germ cells with a distinct developmental-specific expression pattern but not in somatic cells such as Sertoli cells.

The protein resides in the nucleus. It catalyses the reaction ATP + H2O = ADP + phosphate + H(+). In terms of biological role, required for chromosomal synapsis and meiotic recombination in males and females. This Mus musculus (Mouse) protein is ATPase MORC2B.